Reading from the N-terminus, the 272-residue chain is Putative phosphoenolpyruvate synthase regulatory protein (272 aa).

ADP is bound at residue 152–159; that stretch reads GVSRCGKT.

This sequence belongs to the pyruvate, phosphate/water dikinase regulatory protein family. PSRP subfamily.

The enzyme catalyses [pyruvate, water dikinase] + ADP = [pyruvate, water dikinase]-phosphate + AMP + H(+). It catalyses the reaction [pyruvate, water dikinase]-phosphate + phosphate + H(+) = [pyruvate, water dikinase] + diphosphate. In terms of biological role, bifunctional serine/threonine kinase and phosphorylase involved in the regulation of the phosphoenolpyruvate synthase (PEPS) by catalyzing its phosphorylation/dephosphorylation. The protein is Putative phosphoenolpyruvate synthase regulatory protein of Pseudomonas putida (strain ATCC 47054 / DSM 6125 / CFBP 8728 / NCIMB 11950 / KT2440).